A 1119-amino-acid chain; its full sequence is Nuclear matrix constituent protein 1 (1119 aa).

Coiled coils occupy residues 140–226 (LAEL…LYQQ) and 328–488 (LQNR…LDER). Disordered regions lie at residues 846–884 (LDVE…AEEA), 903–974 (LASA…PTGR), 989–1015 (NGAL…EIPD), and 1046–1109 (GINA…EVSM). Composition is skewed to basic residues over residues 859–876 (GNRK…RKRS) and 920–929 (KRTRNSRKRN). Polar residues predominate over residues 1075-1085 (TPEQSRGYQNQ).

It belongs to the CRWN family.

It localises to the nucleus matrix. The protein resides in the nucleus lamina. Its function is as follows. Architectural component of nuclear structure that plays different roles in controlling nuclear size and morphology. The sequence is that of Nuclear matrix constituent protein 1 from Daucus carota subsp. sativus (Carrot).